Consider the following 468-residue polypeptide: Bifunctional protein GlmU (468 aa).

The interval 1-233 (MAQAGSASPL…LEEANLVNDR (233 aa)) is pyrophosphorylase. UDP-N-acetyl-alpha-D-glucosamine contacts are provided by residues 15–18 (LAAG), lysine 29, glutamine 79, and 84–85 (GT). Aspartate 109 contributes to the Mg(2+) binding site. The UDP-N-acetyl-alpha-D-glucosamine site is built by glycine 146, glutamate 159, asparagine 174, and asparagine 231. Residue asparagine 231 coordinates Mg(2+). A linker region spans residues 234–254 (SQLARAEEILRRRILDAHMKE). The interval 255–468 (GVTVRDPVST…GDRRRARTEG (214 aa)) is N-acetyltransferase. Arginine 336 and lysine 354 together coordinate UDP-N-acetyl-alpha-D-glucosamine. Histidine 366 (proton acceptor) is an active-site residue. Residues tyrosine 369 and asparagine 380 each coordinate UDP-N-acetyl-alpha-D-glucosamine. Acetyl-CoA is bound by residues alanine 383, 389-390 (NY), and alanine 426.

It in the N-terminal section; belongs to the N-acetylglucosamine-1-phosphate uridyltransferase family. This sequence in the C-terminal section; belongs to the transferase hexapeptide repeat family. As to quaternary structure, homotrimer. Mg(2+) is required as a cofactor.

The protein resides in the cytoplasm. It catalyses the reaction alpha-D-glucosamine 1-phosphate + acetyl-CoA = N-acetyl-alpha-D-glucosamine 1-phosphate + CoA + H(+). The enzyme catalyses N-acetyl-alpha-D-glucosamine 1-phosphate + UTP + H(+) = UDP-N-acetyl-alpha-D-glucosamine + diphosphate. It functions in the pathway nucleotide-sugar biosynthesis; UDP-N-acetyl-alpha-D-glucosamine biosynthesis; N-acetyl-alpha-D-glucosamine 1-phosphate from alpha-D-glucosamine 6-phosphate (route II): step 2/2. It participates in nucleotide-sugar biosynthesis; UDP-N-acetyl-alpha-D-glucosamine biosynthesis; UDP-N-acetyl-alpha-D-glucosamine from N-acetyl-alpha-D-glucosamine 1-phosphate: step 1/1. Its pathway is bacterial outer membrane biogenesis; LPS lipid A biosynthesis. Catalyzes the last two sequential reactions in the de novo biosynthetic pathway for UDP-N-acetylglucosamine (UDP-GlcNAc). The C-terminal domain catalyzes the transfer of acetyl group from acetyl coenzyme A to glucosamine-1-phosphate (GlcN-1-P) to produce N-acetylglucosamine-1-phosphate (GlcNAc-1-P), which is converted into UDP-GlcNAc by the transfer of uridine 5-monophosphate (from uridine 5-triphosphate), a reaction catalyzed by the N-terminal domain. The sequence is that of Bifunctional protein GlmU from Rubrobacter xylanophilus (strain DSM 9941 / JCM 11954 / NBRC 16129 / PRD-1).